We begin with the raw amino-acid sequence, 206 residues long: Cytochrome b6-f complex iron-sulfur subunit, chloroplastic (206 aa).

The N-terminal 29 residues, 1–29 (MAMLSSRRVAAPAKASAIRRSRVMPVVRA), are a transit peptide targeting the chloroplast. A helical membrane pass occupies residues 39 to 68 (MNKRNIMNLILAGGAGLPITTLALGYGAFF). Residues 92-188 (AGEWLKTHLA…CDVAESGLVT (97 aa)) form the Rieske domain. Positions 134, 136, 152, and 155 each coordinate [2Fe-2S] cluster. C139 and C154 form a disulfide bridge.

The protein belongs to the Rieske iron-sulfur protein family. As to quaternary structure, the 4 large subunits of the cytochrome b6-f complex are cytochrome b6, subunit IV (17 kDa polypeptide, petD), cytochrome f and the Rieske protein, while the 4 small subunits are petG, petL, petM and petN. The complex functions as a dimer. The cofactor is [2Fe-2S] cluster.

Its subcellular location is the plastid. The protein localises to the chloroplast thylakoid membrane. The catalysed reaction is 2 oxidized [plastocyanin] + a plastoquinol + 2 H(+)(in) = 2 reduced [plastocyanin] + a plastoquinone + 4 H(+)(out). Its function is as follows. Component of the cytochrome b6-f complex, which mediates electron transfer between photosystem II (PSII) and photosystem I (PSI), cyclic electron flow around PSI, and state transitions. The chain is Cytochrome b6-f complex iron-sulfur subunit, chloroplastic (petC) from Chlamydomonas reinhardtii (Chlamydomonas smithii).